Here is an 89-residue protein sequence, read N- to C-terminus: Cell division topological specificity factor (89 aa).

This sequence belongs to the MinE family.

Functionally, prevents the cell division inhibition by proteins MinC and MinD at internal division sites while permitting inhibition at polar sites. This ensures cell division at the proper site by restricting the formation of a division septum at the midpoint of the long axis of the cell. In Clostridium beijerinckii (strain ATCC 51743 / NCIMB 8052) (Clostridium acetobutylicum), this protein is Cell division topological specificity factor.